Consider the following 90-residue polypeptide: Secretoglobin family 1D member 1 (90 aa).

The first 21 residues, 1–21 (MRLSVCLLLLTLALCCYRANA), serve as a signal peptide directing secretion.

Heterodimer of a lipophilin A and a lipophilin C (mammaglobin B) monomer associated head to head. As to expression, expressed in lachrymal gland, thymus, kidney, testis, ovary and salivary gland.

It is found in the secreted. May bind androgens and other steroids, may also bind estramustine, a chemotherapeutic agent used for prostate cancer. May be under transcriptional regulation of steroid hormones. In Homo sapiens (Human), this protein is Secretoglobin family 1D member 1 (SCGB1D1).